A 463-amino-acid chain; its full sequence is Glycine--tRNA ligase (463 aa).

Residues Arg102 and Glu165 each contribute to the substrate site. Residues 197–199 (RNE), 207–212 (FRTREF), 284–285 (EL), and 328–331 (GLTR) each bind ATP. Position 212–216 (212–216 (FEQME)) interacts with substrate. Position 324–328 (324–328 (EPAAG)) interacts with substrate.

The protein belongs to the class-II aminoacyl-tRNA synthetase family. In terms of assembly, homodimer.

It is found in the cytoplasm. The catalysed reaction is tRNA(Gly) + glycine + ATP = glycyl-tRNA(Gly) + AMP + diphosphate. Functionally, catalyzes the attachment of glycine to tRNA(Gly). In Mycobacterium bovis (strain ATCC BAA-935 / AF2122/97), this protein is Glycine--tRNA ligase.